The primary structure comprises 149 residues: Large ribosomal subunit protein bL9 (149 aa).

Belongs to the bacterial ribosomal protein bL9 family.

Its function is as follows. Binds to the 23S rRNA. The protein is Large ribosomal subunit protein bL9 of Actinobacillus succinogenes (strain ATCC 55618 / DSM 22257 / CCUG 43843 / 130Z).